The chain runs to 799 residues: Phosphate transporter PHO1-1 (799 aa).

Topologically, residues Met1–Thr406 are cytoplasmic. One can recognise an SPX domain in the interval Val2–Arg354. Residues Ser170–Arg243 are disordered. Low complexity predominate over residues Gly180–Gly193. The segment covering Glu210–Glu222 has biased composition (basic and acidic residues). A compositionally biased stretch (polar residues) spans Gly234–Arg243. The helical transmembrane segment at Phe407–Ala427 threads the bilayer. Residues His428–Pro447 lie on the Extracellular side of the membrane. A helical membrane pass occupies residues Val448–Ala468. Residues Trp469 to Asp492 lie on the Cytoplasmic side of the membrane. Residues Val493–Ser513 traverse the membrane as a helical segment. The Extracellular portion of the chain corresponds to Leu514–Gln522. The chain crosses the membrane as a helical span at residues Ala523–Val543. Topologically, residues Tyr544–Ser672 are cytoplasmic. In terms of domain architecture, EXS spans Ile608–Asp799. A helical transmembrane segment spans residues Leu673 to Val693. The Extracellular segment spans residues Lys694–Ser718. A helical membrane pass occupies residues Ile719–Ile739. Residues His740–Asp799 lie on the Cytoplasmic side of the membrane.

This sequence belongs to the SYG1 (TC 2.A.94) family. In terms of tissue distribution, expressed in roots and flowers.

Its subcellular location is the cell membrane. In terms of biological role, may transport inorganic phosphate (Pi). In Oryza sativa subsp. japonica (Rice), this protein is Phosphate transporter PHO1-1 (PHO1-1).